Here is a 604-residue protein sequence, read N- to C-terminus: UvrABC system protein C (604 aa).

A GIY-YIG domain is found at 12–90 (TAPGVYLMRD…IKQHQPRYNL (79 aa)). The 36-residue stretch at 200-235 (KDLVSGFRQRMKEAAEGLHYEEAARWRDLLKAIDTT) folds into the UVR domain.

This sequence belongs to the UvrC family. In terms of assembly, interacts with UvrB in an incision complex.

Its subcellular location is the cytoplasm. In terms of biological role, the UvrABC repair system catalyzes the recognition and processing of DNA lesions. UvrC both incises the 5' and 3' sides of the lesion. The N-terminal half is responsible for the 3' incision and the C-terminal half is responsible for the 5' incision. The chain is UvrABC system protein C from Trichlorobacter lovleyi (strain ATCC BAA-1151 / DSM 17278 / SZ) (Geobacter lovleyi).